Here is a 520-residue protein sequence, read N- to C-terminus: Peptide chain release factor 3 (520 aa).

The 266-residue stretch at 8-273 (ESRKTFAIIS…AYVDHAPMPN (266 aa)) folds into the tr-type G domain. GTP is bound by residues 17–24 (SHPDAGKT), 85–89 (DTPGH), and 139–142 (NKLD).

This sequence belongs to the TRAFAC class translation factor GTPase superfamily. Classic translation factor GTPase family. PrfC subfamily.

Its subcellular location is the cytoplasm. In terms of biological role, increases the formation of ribosomal termination complexes and stimulates activities of RF-1 and RF-2. It binds guanine nucleotides and has strong preference for UGA stop codons. It may interact directly with the ribosome. The stimulation of RF-1 and RF-2 is significantly reduced by GTP and GDP, but not by GMP. The polypeptide is Peptide chain release factor 3 (Staphylococcus carnosus (strain TM300)).